We begin with the raw amino-acid sequence, 141 residues long: Holo-[acyl-carrier-protein] synthase (141 aa).

Residues aspartate 8 and glutamate 61 each contribute to the Mg(2+) site.

This sequence belongs to the P-Pant transferase superfamily. AcpS family. The cofactor is Mg(2+).

Its subcellular location is the cytoplasm. It carries out the reaction apo-[ACP] + CoA = holo-[ACP] + adenosine 3',5'-bisphosphate + H(+). Functionally, transfers the 4'-phosphopantetheine moiety from coenzyme A to a Ser of acyl-carrier-protein. This Rhodopseudomonas palustris (strain HaA2) protein is Holo-[acyl-carrier-protein] synthase.